The chain runs to 177 residues: Large ribosomal subunit protein uL6 (177 aa).

Belongs to the universal ribosomal protein uL6 family. In terms of assembly, part of the 50S ribosomal subunit.

In terms of biological role, this protein binds to the 23S rRNA, and is important in its secondary structure. It is located near the subunit interface in the base of the L7/L12 stalk, and near the tRNA binding site of the peptidyltransferase center. This Histophilus somni (strain 2336) (Haemophilus somnus) protein is Large ribosomal subunit protein uL6.